The chain runs to 511 residues: 2,3-bisphosphoglycerate-independent phosphoglycerate mutase (511 aa).

A Mn(2+)-binding site is contributed by D12. Phosphotyrosine is present on Y36. Residue S62 participates in Mn(2+) binding. The active-site Phosphoserine intermediate is S62. Substrate is bound by residues H123, 153–154 (RD), R185, R191, 261–264 (RPDR), and K336. 5 residues coordinate Mn(2+): D403, H407, D444, H445, and H462.

The protein belongs to the BPG-independent phosphoglycerate mutase family. In terms of assembly, monomer. It depends on Mn(2+) as a cofactor.

The enzyme catalyses (2R)-2-phosphoglycerate = (2R)-3-phosphoglycerate. Its pathway is carbohydrate degradation; glycolysis; pyruvate from D-glyceraldehyde 3-phosphate: step 3/5. Essential for rapid growth and for sporulation. Catalyzes the interconversion of 2-phosphoglycerate and 3-phosphoglycerate. The chain is 2,3-bisphosphoglycerate-independent phosphoglycerate mutase from Bacillus velezensis (strain DSM 23117 / BGSC 10A6 / LMG 26770 / FZB42) (Bacillus amyloliquefaciens subsp. plantarum).